A 351-amino-acid polypeptide reads, in one-letter code: tRNA N6-adenosine threonylcarbamoyltransferase (351 aa).

The Fe cation site is built by histidine 124 and histidine 128. Residues 146 to 150 (LVSGG), aspartate 180, glycine 193, aspartate 197, and asparagine 285 each bind substrate. Aspartate 313 contributes to the Fe cation binding site.

The protein belongs to the KAE1 / TsaD family. Fe(2+) serves as cofactor.

Its subcellular location is the cytoplasm. It carries out the reaction L-threonylcarbamoyladenylate + adenosine(37) in tRNA = N(6)-L-threonylcarbamoyladenosine(37) in tRNA + AMP + H(+). Functionally, required for the formation of a threonylcarbamoyl group on adenosine at position 37 (t(6)A37) in tRNAs that read codons beginning with adenine. Is involved in the transfer of the threonylcarbamoyl moiety of threonylcarbamoyl-AMP (TC-AMP) to the N6 group of A37, together with TsaE and TsaB. TsaD likely plays a direct catalytic role in this reaction. The polypeptide is tRNA N6-adenosine threonylcarbamoyltransferase (Mycobacterium leprae (strain TN)).